Reading from the N-terminus, the 545-residue chain is Luciferin 4-monooxygenase (545 aa).

The Microbody targeting signal signature appears at 543–545; the sequence is SKL.

This sequence belongs to the ATP-dependent AMP-binding enzyme family. It depends on Mg(2+) as a cofactor.

It localises to the peroxisome. The catalysed reaction is firefly D-luciferin + ATP + O2 = firefly oxyluciferin + hnu + AMP + CO2 + diphosphate. Produces green light with a wavelength of 562 nm. The sequence is that of Luciferin 4-monooxygenase from Photuris pensylvanica (Pennsylania firefly).